We begin with the raw amino-acid sequence, 294 residues long: Diaminopimelate epimerase (294 aa).

2 residues coordinate substrate: asparagine 11 and asparagine 78. Catalysis depends on cysteine 87, which acts as the Proton donor. Substrate contacts are provided by residues 88-89 (GN), asparagine 167, asparagine 203, and 221-222 (ER). The active-site Proton acceptor is the cysteine 230. Substrate is bound at residue 231–232 (GT).

The protein belongs to the diaminopimelate epimerase family. As to quaternary structure, homodimer.

It is found in the cytoplasm. The enzyme catalyses (2S,6S)-2,6-diaminopimelate = meso-2,6-diaminopimelate. Its pathway is amino-acid biosynthesis; L-lysine biosynthesis via DAP pathway; DL-2,6-diaminopimelate from LL-2,6-diaminopimelate: step 1/1. Catalyzes the stereoinversion of LL-2,6-diaminopimelate (L,L-DAP) to meso-diaminopimelate (meso-DAP), a precursor of L-lysine and an essential component of the bacterial peptidoglycan. The polypeptide is Diaminopimelate epimerase (Mycolicibacterium paratuberculosis (strain ATCC BAA-968 / K-10) (Mycobacterium paratuberculosis)).